The following is a 166-amino-acid chain: Putative membrane protein 164 (166 aa).

The Intravirion portion of the chain corresponds to 1–4; that stretch reads MYHP. The helical transmembrane segment at 5 to 25 threads the bilayer; sequence VVQVLIGLILVIILILGFYHL. Residues 26 to 166 are Virion surface-facing; it reads KKKSCKTDTD…TIMGIARNIL (141 aa).

It belongs to the asfivirus envelope protein p22 family.

Its subcellular location is the virion membrane. It is found in the host cell membrane. The chain is Putative membrane protein 164 from Ornithodoros (relapsing fever ticks).